Reading from the N-terminus, the 100-residue chain is Large ribosomal subunit protein uL23 (100 aa).

The protein belongs to the universal ribosomal protein uL23 family. In terms of assembly, part of the 50S ribosomal subunit. Contacts protein L29, and trigger factor when it is bound to the ribosome.

One of the early assembly proteins it binds 23S rRNA. One of the proteins that surrounds the polypeptide exit tunnel on the outside of the ribosome. Forms the main docking site for trigger factor binding to the ribosome. The polypeptide is Large ribosomal subunit protein uL23 (Buchnera aphidicola subsp. Baizongia pistaciae (strain Bp)).